Consider the following 367-residue polypeptide: 3-dehydroquinate synthase (367 aa).

NAD(+) contacts are provided by residues 69-74 (DGEAFK), 103-107 (GVIGD), 127-128 (TT), Lys140, and Lys149. Residues Glu182, His245, and His262 each coordinate Zn(2+).

Belongs to the sugar phosphate cyclases superfamily. Dehydroquinate synthase family. It depends on Co(2+) as a cofactor. Zn(2+) is required as a cofactor. Requires NAD(+) as cofactor.

It localises to the cytoplasm. It carries out the reaction 7-phospho-2-dehydro-3-deoxy-D-arabino-heptonate = 3-dehydroquinate + phosphate. The protein operates within metabolic intermediate biosynthesis; chorismate biosynthesis; chorismate from D-erythrose 4-phosphate and phosphoenolpyruvate: step 2/7. In terms of biological role, catalyzes the conversion of 3-deoxy-D-arabino-heptulosonate 7-phosphate (DAHP) to dehydroquinate (DHQ). This chain is 3-dehydroquinate synthase, found in Pseudomonas syringae pv. syringae (strain B728a).